We begin with the raw amino-acid sequence, 480 residues long: Probable G-protein coupled receptor Mth-like 6 (480 aa).

The signal sequence occupies residues 1 to 20; it reads MLLNILAIILVFVISSQSEA. Topologically, residues 21-202 are extracellular; it reads VIPGCDYFDT…LEHVYIPKSM (182 aa). 4 disulfide bridges follow: Cys25–Cys78, Cys80–Cys85, Cys89–Cys179, and Cys90–Cys101. N-linked (GlcNAc...) asparagine glycosylation occurs at Asn40. N-linked (GlcNAc...) asparagine glycosylation is found at Asn160 and Asn170. The chain crosses the membrane as a helical span at residues 203–225; the sequence is PAVPQVGTISMVGCILTIAVYLY. Topologically, residues 226–231 are cytoplasmic; that stretch reads IKKLRN. The helical transmembrane segment at 232–254 threads the bilayer; that stretch reads LLGKCFICYVFCKFVQYLIWAGG. Over 255–263 the chain is Extracellular; it reads DLNLWNNIC. The helical transmembrane segment at 264–283 threads the bilayer; sequence SLAGYTNYFFALASHFWLSV. Residues 284 to 303 lie on the Cytoplasmic side of the membrane; the sequence is MSHQIWKNLRLINRDERSYH. The chain crosses the membrane as a helical span at residues 304 to 326; it reads FLIYNIYGWGTPAIMTAITYLVD. Residues 327 to 356 are Extracellular-facing; sequence WAWEDRPDKLNWIPGVGLYRCWINTYDWSA. The helical transmembrane segment at 357 to 379 threads the bilayer; sequence MIYLYGPMLILSLFNVVTFILTV. Topologically, residues 380 to 405 are cytoplasmic; the sequence is NHIMKIKSSVKSSTQQQRKCIQNNDF. Residues 406–428 traverse the membrane as a helical segment; the sequence is LLYLRLSVMMGVTGISEVITYFV. Over 429-437 the chain is Extracellular; sequence KRHKFWRQV. Residues 438-457 form a helical membrane-spanning segment; sequence LRVPNFFHLGSGIVVFVLFI. The Cytoplasmic portion of the chain corresponds to 458–480; that stretch reads LKRSTFQMIMERISGPRRQQPAS.

Belongs to the G-protein coupled receptor 2 family. Mth subfamily.

Its subcellular location is the cell membrane. This chain is Probable G-protein coupled receptor Mth-like 6 (mthl6), found in Drosophila melanogaster (Fruit fly).